Here is a 214-residue protein sequence, read N- to C-terminus: Orotate phosphoribosyltransferase (214 aa).

A 5-phospho-alpha-D-ribose 1-diphosphate-binding site is contributed by Lys-26. Orotate is bound at residue 34-35 (FF). Residues 72–73 (YK), Arg-99, Lys-100, Lys-103, His-105, and 124–132 (DDVITAGTA) each bind 5-phospho-alpha-D-ribose 1-diphosphate. Residues Thr-128 and Arg-157 each contribute to the orotate site.

This sequence belongs to the purine/pyrimidine phosphoribosyltransferase family. PyrE subfamily. Homodimer. Mg(2+) is required as a cofactor.

It catalyses the reaction orotidine 5'-phosphate + diphosphate = orotate + 5-phospho-alpha-D-ribose 1-diphosphate. Its pathway is pyrimidine metabolism; UMP biosynthesis via de novo pathway; UMP from orotate: step 1/2. Functionally, catalyzes the transfer of a ribosyl phosphate group from 5-phosphoribose 1-diphosphate to orotate, leading to the formation of orotidine monophosphate (OMP). This is Orotate phosphoribosyltransferase from Pseudomonas fluorescens (strain Pf0-1).